A 440-amino-acid chain; its full sequence is Transposon Ty1-LR4 Gag polyprotein (440 aa).

3 stretches are compositionally biased toward polar residues: residues 1–10 (MESQQLSQHP), 48–60 (TKAN…TPAS), and 127–152 (QSQF…GNTF). 3 disordered regions span residues 1–93 (MESQ…MMTQ), 126–173 (PQSQ…RPPP), and 352–440 (GSRN…PGTY). A compositionally biased stretch (low complexity) spans 153 to 165 (TDSSSADSDMTST). The segment at 299 to 401 (NNGIHINNKV…NSKSKTARAH (103 aa)) is RNA-binding. The segment covering 402 to 418 (NVSTSNNSPSTDNDSIS) has biased composition (low complexity). At Ser416 the chain carries Phosphoserine. Residues 419–428 (KSTTEPIQLN) show a composition bias toward polar residues. Positions 429-440 (NKHDLHLRPGTY) are enriched in basic and acidic residues.

Homotrimer.

It is found in the cytoplasm. Capsid protein (CA) is the structural component of the virus-like particle (VLP), forming the shell that encapsulates the retrotransposons dimeric RNA genome. The particles are assembled from trimer-clustered units and there are holes in the capsid shells that allow for the diffusion of macromolecules. CA also has nucleocapsid-like chaperone activity, promoting primer tRNA(i)-Met annealing to the multipartite primer-binding site (PBS), dimerization of Ty1 RNA and initiation of reverse transcription. The protein is Transposon Ty1-LR4 Gag polyprotein (TY1A-LR4) of Saccharomyces cerevisiae (strain ATCC 204508 / S288c) (Baker's yeast).